Here is a 337-residue protein sequence, read N- to C-terminus: N-acetyl-gamma-glutamyl-phosphate reductase (337 aa).

The active site involves cysteine 155.

It belongs to the NAGSA dehydrogenase family. Type 1 subfamily.

Its subcellular location is the cytoplasm. The catalysed reaction is N-acetyl-L-glutamate 5-semialdehyde + phosphate + NADP(+) = N-acetyl-L-glutamyl 5-phosphate + NADPH + H(+). It functions in the pathway amino-acid biosynthesis; L-arginine biosynthesis; N(2)-acetyl-L-ornithine from L-glutamate: step 3/4. Catalyzes the NADPH-dependent reduction of N-acetyl-5-glutamyl phosphate to yield N-acetyl-L-glutamate 5-semialdehyde. The protein is N-acetyl-gamma-glutamyl-phosphate reductase of Alteromonas mediterranea (strain DSM 17117 / CIP 110805 / LMG 28347 / Deep ecotype).